Reading from the N-terminus, the 414-residue chain is MGSDVRDMNLLPPVSSLSGNSSCNMPVSSSAQWAPVLDFPPGAPYSSLTPHSFIKQEPTWNPDPHEDQCLSAFTVHFSGQFTGTAGACRYGPFGAPTPSQATTGQARMFSNAPYLSNCLDNQQGMRNQGYSAVAFDGTPSYGHTPSHHTSQFTNHSFKHEDPLSQQTSLGEQQYSVPPPVYGCHTPTDTCTGSQALLLRTPYNSDNLYPMTSQLDCMTWNQMNLGSSLKSHGTSYENDSHSSPMLYNCGGQYRIHTHGVFRGIQDVRRVPGVTPAIVRSTEANEKRPFMCAYPGCNKRYFKLSHLQMHSRKHTGEKPYQCDFKDCERRFSRSDQLKRHQRRHTGIKPFQCKTCQRKFSRSDHLKTHTRTHTGKTSEKPFSCRWPSCQKKFARSDELVRHHNMHQRNMTKLQLAL.

Residues K55 and K158 each participate in a glycyl lysine isopeptide (Lys-Gly) (interchain with G-Cter in SUMO) cross-link. A 9aaTAD motif is present at residues M217 to G225. C2H2-type zinc fingers lie at residues F288–H312, Y318–H342, and F348–H370. Important for interaction with target DNA regions lie at residues S332 to K346 and S358 to H366. The KTS motif signature appears at K373–S375. Residues F379–H403 form a C2H2-type 4 zinc finger.

This sequence belongs to the EGR C2H2-type zinc-finger protein family. Expressed around the pronephric anlage and in the pronephros; expression is restricted to the splanchnic mesoderm (the site where the glomus forms) from tailbud stages, and the glomus of early tadpoles. Not expressed in the pronephric tubules or pronephric duct. In tadpoles (stage 38-39), additional expression begins in the heart. Also expressed in the adult kidney (mesonephros).

It is found in the nucleus. It localises to the cytoplasm. The protein localises to the nucleus speckle. Transcription factor required for development of the vascular component of the pronephric kidney, the glomus; may repress tubule-specific gene expression in the portion of the pronephros fated to form the glomus. Recognizes and binds to the DNA sequence 5'-GCG(T/G)GGGCG-3'. Inhibits Wnt-signaling during embryonic development. Function may be isoform-specific: the isoform containing the KTS motif is less effective in inhibiting wnt signaling. This chain is Wilms tumor protein homolog A (wt1-a), found in Xenopus laevis (African clawed frog).